The following is a 156-amino-acid chain: Ribosomal RNA large subunit methyltransferase H (156 aa).

Residues Gly104 and 123–128 contribute to the S-adenosyl-L-methionine site; that span reads LSALTL.

It belongs to the RNA methyltransferase RlmH family. Homodimer.

It localises to the cytoplasm. The enzyme catalyses pseudouridine(1915) in 23S rRNA + S-adenosyl-L-methionine = N(3)-methylpseudouridine(1915) in 23S rRNA + S-adenosyl-L-homocysteine + H(+). Its function is as follows. Specifically methylates the pseudouridine at position 1915 (m3Psi1915) in 23S rRNA. This is Ribosomal RNA large subunit methyltransferase H from Nitrosospira multiformis (strain ATCC 25196 / NCIMB 11849 / C 71).